The chain runs to 380 residues: Cytochrome b (380 aa).

4 helical membrane passes run phenylalanine 33–methionine 53, tryptophan 77–valine 98, tryptophan 113–leucine 133, and phenylalanine 178–leucine 198. 2 residues coordinate heme b: histidine 83 and histidine 97. Residues histidine 182 and histidine 196 each coordinate heme b. Histidine 201 contributes to the a ubiquinone binding site. A run of 4 helical transmembrane segments spans residues tyrosine 226–serine 246, leucine 288–histidine 308, leucine 320–glycine 340, and phenylalanine 347–proline 367.

The protein belongs to the cytochrome b family. As to quaternary structure, the cytochrome bc1 complex contains 3 respiratory subunits (MT-CYB, CYC1 and UQCRFS1), 2 core proteins (UQCRC1 and UQCRC2) and probably 6 low-molecular weight proteins. Heme b is required as a cofactor.

It localises to the mitochondrion inner membrane. Functionally, component of the ubiquinol-cytochrome c reductase complex (complex III or cytochrome b-c1 complex) that is part of the mitochondrial respiratory chain. The b-c1 complex mediates electron transfer from ubiquinol to cytochrome c. Contributes to the generation of a proton gradient across the mitochondrial membrane that is then used for ATP synthesis. In Neocyttus rhomboidalis (Spiky oreo dory), this protein is Cytochrome b (mt-cyb).